The following is a 295-amino-acid chain: Ribosomal protein L11 methyltransferase (295 aa).

4 residues coordinate S-adenosyl-L-methionine: Thr-150, Gly-171, Asp-193, and Asn-232.

Belongs to the methyltransferase superfamily. PrmA family.

The protein localises to the cytoplasm. It catalyses the reaction L-lysyl-[protein] + 3 S-adenosyl-L-methionine = N(6),N(6),N(6)-trimethyl-L-lysyl-[protein] + 3 S-adenosyl-L-homocysteine + 3 H(+). Its function is as follows. Methylates ribosomal protein L11. This chain is Ribosomal protein L11 methyltransferase, found in Neisseria gonorrhoeae (strain ATCC 700825 / FA 1090).